Reading from the N-terminus, the 417-residue chain is NADH-quinone oxidoreductase subunit D (417 aa).

It belongs to the complex I 49 kDa subunit family. As to quaternary structure, NDH-1 is composed of 14 different subunits. Subunits NuoB, C, D, E, F, and G constitute the peripheral sector of the complex.

It is found in the cell inner membrane. The enzyme catalyses a quinone + NADH + 5 H(+)(in) = a quinol + NAD(+) + 4 H(+)(out). Functionally, NDH-1 shuttles electrons from NADH, via FMN and iron-sulfur (Fe-S) centers, to quinones in the respiratory chain. The immediate electron acceptor for the enzyme in this species is believed to be ubiquinone. Couples the redox reaction to proton translocation (for every two electrons transferred, four hydrogen ions are translocated across the cytoplasmic membrane), and thus conserves the redox energy in a proton gradient. This chain is NADH-quinone oxidoreductase subunit D, found in Burkholderia ambifaria (strain MC40-6).